We begin with the raw amino-acid sequence, 122 residues long: Large ribosomal subunit protein uL22c (122 aa).

This sequence belongs to the universal ribosomal protein uL22 family. Part of the 50S ribosomal subunit.

It is found in the plastid. The protein resides in the chloroplast. In terms of biological role, this protein binds specifically to 23S rRNA. The globular domain of the protein is located near the polypeptide exit tunnel on the outside of the subunit, while an extended beta-hairpin is found that lines the wall of the exit tunnel in the center of the 70S ribosome. The protein is Large ribosomal subunit protein uL22c (rpl22) of Adiantum capillus-veneris (Maidenhair fern).